The sequence spans 81 residues: Photosystem I iron-sulfur center (81 aa).

4Fe-4S ferredoxin-type domains are found at residues S2–W31 and I39–Y68. [4Fe-4S] cluster-binding residues include C11, C14, C17, C21, C48, C51, C54, and C58.

As to quaternary structure, the eukaryotic PSI reaction center is composed of at least 11 subunits. [4Fe-4S] cluster is required as a cofactor.

It localises to the plastid. The protein localises to the chloroplast thylakoid membrane. It carries out the reaction reduced [plastocyanin] + hnu + oxidized [2Fe-2S]-[ferredoxin] = oxidized [plastocyanin] + reduced [2Fe-2S]-[ferredoxin]. Functionally, apoprotein for the two 4Fe-4S centers FA and FB of photosystem I (PSI); essential for photochemical activity. FB is the terminal electron acceptor of PSI, donating electrons to ferredoxin. The C-terminus interacts with PsaA/B/D and helps assemble the protein into the PSI complex. Required for binding of PsaD and PsaE to PSI. PSI is a plastocyanin-ferredoxin oxidoreductase, converting photonic excitation into a charge separation, which transfers an electron from the donor P700 chlorophyll pair to the spectroscopically characterized acceptors A0, A1, FX, FA and FB in turn. This Chloranthus spicatus (Chulantree) protein is Photosystem I iron-sulfur center.